A 135-amino-acid chain; its full sequence is Cytochrome c oxidase subunit 2 (135 aa).

Cu cation-binding residues include H81, C116, C120, and H124.

It belongs to the cytochrome c oxidase subunit 2 family.

Its subcellular location is the cell membrane. It carries out the reaction 4 Fe(II)-[cytochrome c] + O2 + 8 H(+)(in) = 4 Fe(III)-[cytochrome c] + 2 H2O + 4 H(+)(out). In terms of biological role, subunits I and II form the functional core of the enzyme complex. Electrons originating in cytochrome c are transferred via heme a and Cu(A) to the binuclear center formed by heme a3 and Cu(B). The polypeptide is Cytochrome c oxidase subunit 2 (cbaB) (Thermus thermophilus).